A 539-amino-acid chain; its full sequence is MADLAAAWTRLEAAAKVAGEKRIALMFEAEPGRLAALTLNVAGLHIDLSKQAWDEAGLEAALDLAHAADVEGARTRMFGGEAINSSEGRAVLHTALRAAKDADVRAGGVPVMAEVEAVRVRMKAFTEAVRSGAIKGATGKPFKAILHIGIGGSDLGPRLLWDALRPIKPTIDLRFVANVDGAEFALTTADLDPAETLVIVVSKTFTTQETLANAAAARAWLSAALGEQGANQHLAAISTALDKTAAFGVADDRVFGFWDWVGGRYSLWSSVSLSVAVACGWEAFEGFLQGGAAMDAHFRDAPLEKNAAVLIALAQIFNRNGLDRRARSVVPYSHRLRRLASFLQQLEMESNGKSVGPDGQAVKHGTATVVFGDEGANVQHAYFQCMHQGTDITPLEFVALAQSDEGPAGMHAKLLSNVLAQAEALMVGRTIEDVRTELVAKGVSEAEIATLAPQRAFAGNRPSTMVVLDRLTPQTFGALIALYEHKTFVEGVIWGVNSFDQWGVELGKVMAGRILPELESGAAGRHDPSTAALIERLKL.

Residue glutamate 349 is the Proton donor of the active site. Residues histidine 380 and lysine 508 contribute to the active site.

Belongs to the GPI family.

The protein localises to the cytoplasm. The enzyme catalyses alpha-D-glucose 6-phosphate = beta-D-fructose 6-phosphate. The protein operates within carbohydrate biosynthesis; gluconeogenesis. Its pathway is carbohydrate degradation; glycolysis; D-glyceraldehyde 3-phosphate and glycerone phosphate from D-glucose: step 2/4. Functionally, catalyzes the reversible isomerization of glucose-6-phosphate to fructose-6-phosphate. This Caulobacter sp. (strain K31) protein is Glucose-6-phosphate isomerase.